Consider the following 546-residue polypeptide: Carboxylic ester hydrolase FVEG_12634 (546 aa).

The interval 72–91 (FTDGTKICPQPPSSNTPDPS) is disordered. Residue Ser214 is the Acyl-ester intermediate of the active site.

The protein belongs to the type-B carboxylesterase/lipase family.

It catalyses the reaction a carboxylic ester + H2O = an alcohol + a carboxylate + H(+). In terms of biological role, carboxylic ester hydrolase; part of the Fusarium detoxification of benzoxazolinone cluster 2 (FDB2) involved in the degradation of benzoxazolinones produced by the host plant. Maize, wheat, and rye produce the 2 benzoxazinone phytoanticipins 2,4-dihy-droxy-7-methoxy-1,4-benzoxazin-3-one (DIMBOA) and 2,4-dihydroxy-1,4-benzoxazin-3-one (DIBOA) that, due to their inherent instability once released, spontaneously degrade to the more stable corresponding benzoxazolinones, 6-methoxy-2-benzoxazolinone (MBOA) and 2-benzoxazolinone (BOA), respectively. The first step in the detoxification of benzoxazolinones involves the hydrolysis of the cyclic ester bond of benzoxazolinones by the FDB1 cluster gamma-lactamase MBL1 to aminophenols. MBL1 is able to convert BOA into 2-aminophenol (2-AP), as well as MBOA into 5-methoxy-2-aminophenol (2-AMP). The FDB2 cluster N-malonyltransferase FDB2/NAT1 then metabolizes aminophenols via N-malonylation to non-toxic malonamic acids. FDB2/NAT1 converts 2-AP into N-(2-hydroxyphenyl) malonamic acid (HPMA) and 2-AMP into N-(2-hydroxy-4-methoxyphenyl) malonamic acid (HMPMA). The duplicated dienlactone hydrolases DLH1 and DLH2 may provide redundant function for hydrolyzing the lactone moiety in the BOA molecule. The roles of the amidases an other enzymes encoded by the 2 FDB clusters have not been identified so far. In Gibberella moniliformis (strain M3125 / FGSC 7600) (Maize ear and stalk rot fungus), this protein is Carboxylic ester hydrolase FVEG_12634.